A 488-amino-acid chain; its full sequence is Protein Notchless (488 aa).

The interval 1-22 is disordered; it reads MLAKKQKMQETDTEQEATPHTI. The interval 19–101 is ubiquitin-like (UBL) domain; sequence PHTIQARLVS…VIDIVYQPQA (83 aa). 8 WD repeats span residues 117-156, 159-198, 202-246, 249-287, 329-370, 373-412, 415-454, and 457-488; these read GHAE…PHFT, GHKQ…QKGR, GHKK…CLMN, GHTN…LCRT, LQES…CVER, GHQN…YMAT, GHVQ…LAQE, and GHAD…LWAY.

This sequence belongs to the NLE1/RSA4 family. Interacts with Notch (via cytoplasmic domain). Associates with the pre-60S ribosomal particle.

It is found in the nucleus. The protein localises to the nucleolus. Its function is as follows. Plays a role in regulating Notch activity. The polypeptide is Protein Notchless (Drosophila melanogaster (Fruit fly)).